A 131-amino-acid chain; its full sequence is MSEIPGDLKFLKSHEWARVEGNGRVTVGISDHAQGLLGDLVYVELPEVGADAKAGEQIAVVESVKAASDVYSPISGKVVEVNSALSDKPETINEDAYGEGWMFVVELTNAEEVNELLDPDAYAEALENDDH.

Residues 24–106 (RVTVGISDHA…YGEGWMFVVE (83 aa)) form the Lipoyl-binding domain. Lysine 65 bears the N6-lipoyllysine mark.

This sequence belongs to the GcvH family. In terms of assembly, the glycine cleavage system is composed of four proteins: P, T, L and H. Requires (R)-lipoate as cofactor.

Functionally, the glycine cleavage system catalyzes the degradation of glycine. The H protein shuttles the methylamine group of glycine from the P protein to the T protein. This is Glycine cleavage system H protein from Stenotrophomonas maltophilia (strain K279a).